Reading from the N-terminus, the 95-residue chain is Stationary phase-expressed protein 1 (95 aa).

The helical transmembrane segment at 20–38 (FRYIMLGLVGAAVVPTAYM) threads the bilayer.

The protein resides in the mitochondrion membrane. The protein is Stationary phase-expressed protein 1 (SPG1) of Saccharomyces cerevisiae (strain RM11-1a) (Baker's yeast).